A 124-amino-acid chain; its full sequence is Small ribosomal subunit protein bS6 (124 aa).

Belongs to the bacterial ribosomal protein bS6 family.

In terms of biological role, binds together with bS18 to 16S ribosomal RNA. The polypeptide is Small ribosomal subunit protein bS6 (Haemophilus ducreyi (strain 35000HP / ATCC 700724)).